The sequence spans 334 residues: Malate dehydrogenase (334 aa).

17–23 (GAAGQIG) contacts NAD(+). Substrate-binding residues include R98 and R104. NAD(+) is bound by residues N111, Q118, and 135-137 (VGN). Residues N137 and R168 each coordinate substrate. H193 acts as the Proton acceptor in catalysis.

It belongs to the LDH/MDH superfamily. MDH type 2 family.

The catalysed reaction is (S)-malate + NAD(+) = oxaloacetate + NADH + H(+). Functionally, catalyzes the reversible oxidation of malate to oxaloacetate. This Deinococcus geothermalis (strain DSM 11300 / CIP 105573 / AG-3a) protein is Malate dehydrogenase.